The sequence spans 91 residues: PqqA binding protein 1 (91 aa).

The protein belongs to the PqqD family. As to quaternary structure, monomer. Interacts with PqqE.

The protein operates within cofactor biosynthesis; pyrroloquinoline quinone biosynthesis. In terms of biological role, functions as a PqqA binding protein and presents PqqA to PqqE, in the pyrroloquinoline quinone (PQQ) biosynthetic pathway. This chain is PqqA binding protein 1 (pqqD1), found in Pseudomonas putida (strain ATCC 47054 / DSM 6125 / CFBP 8728 / NCIMB 11950 / KT2440).